A 142-amino-acid polypeptide reads, in one-letter code: Ribosome-binding factor A (142 aa).

The segment at 119–142 (ETLGEVQSESDQPTTDETTTVNKT) is disordered. Residues 123 to 142 (EVQSESDQPTTDETTTVNKT) are compositionally biased toward polar residues.

This sequence belongs to the RbfA family. Monomer. Binds 30S ribosomal subunits, but not 50S ribosomal subunits or 70S ribosomes.

The protein localises to the cytoplasm. Functionally, one of several proteins that assist in the late maturation steps of the functional core of the 30S ribosomal subunit. Associates with free 30S ribosomal subunits (but not with 30S subunits that are part of 70S ribosomes or polysomes). Required for efficient processing of 16S rRNA. May interact with the 5'-terminal helix region of 16S rRNA. The chain is Ribosome-binding factor A from Prochlorococcus marinus (strain MIT 9303).